The following is a 1033-amino-acid chain: Collagen alpha-2(I) chain (1033 aa).

The disordered stretch occupies residues 1-1033 (SGGFDFSFLP…FGYEGDFYRA (1033 aa)). 3 stretches are compositionally biased toward low complexity: residues 25–71 (LGPG…ARGP), 154–175 (SRGSDGSVGPVGPAGPIGSAGP), and 221–242 (PGANGLTGAKGAAGLPGVAGAP). Positions 276–285 (GESGGKGEPG) are enriched in gly residues. The span at 286–296 (SAGPQGPPGSS) shows a compositional bias: low complexity. The span at 318–327 (GLRGGPGSRG) shows a compositional bias: gly residues. 2 stretches are compositionally biased toward low complexity: residues 340–356 (PAGARGASGPAGVRGPS) and 391–410 (LPGIDGRPGPIGPAGARGEA). The span at 459–468 (GVQGGKGEQG) shows a compositional bias: gly residues. Composition is skewed to low complexity over residues 519 to 528 (PSGAIGSRGP) and 540 to 550 (EPGVVGAPGTA). The span at 551-560 (GPAGSGGLPG) shows a compositional bias: gly residues. 2 stretches are compositionally biased toward low complexity: residues 583 to 627 (VGTT…PRGS) and 634 to 654 (VGPAGPNGFAGPAGAAGQPGA). A compositionally biased stretch (basic and acidic residues) spans 655-664 (KGERGTKGPK). The span at 672–682 (PTGPVGSAGPA) shows a compositional bias: low complexity. Residues 692-701 (GSRGDGGPPG) show a composition bias toward gly residues. Residues 703 to 712 (TGFPGAAGRT) show a composition bias toward low complexity. The segment covering 749–758 (GETGAGGPPG) has biased composition (gly residues). Composition is skewed to low complexity over residues 766-793 (SGEPGTAGPPGTAGPQGLLGAPGILGLP) and 801-811 (LPGVAGAVGEP). Residues 812 to 834 (GPLGIGPPGARGPSGGVGPGVNG) are compositionally biased toward gly residues. A compositionally biased stretch (low complexity) spans 873 to 909 (AAGAPGPHGAVGPAGKHGNRGEPGPVGSAGPVGALGP). Basic and acidic residues predominate over residues 919 to 930 (RGDKGEAGDKGP). Over residues 1003–1015 (SGPPGPPGPPGPP) the composition is skewed to pro residues.

Belongs to the fibrillar collagen family. As to quaternary structure, trimers of one alpha 2(I) and two alpha 1(I) chains. Interacts (via C-terminus) with TMEM131 (via PapD-L domain); the interaction is direct and is involved in assembly and TRAPPIII ER-to-Golgi transport complex-dependent secretion of collagen. Prolines at the third position of the tripeptide repeating unit (G-X-Y) are hydroxylated in some or all of the chains. Expressed in bone.

The protein localises to the secreted. It localises to the extracellular space. It is found in the extracellular matrix. In terms of biological role, type I collagen is a member of group I collagen (fibrillar forming collagen). In Mylodon darwinii (Giant ground sloth), this protein is Collagen alpha-2(I) chain.